Here is a 524-residue protein sequence, read N- to C-terminus: Coronin-2A (524 aa).

5 WD repeats span residues 80 to 120 (GHRG…LTRN), 130 to 170 (GHAR…SVIA), 178 to 217 (CHQD…VLQE), 220 to 263 (YKGH…VPLT), and 269 to 308 (GSSG…PHLT). Residues 403–436 (LLDSQTLPPERPLSNSMVQVSPQPLEPMKQPAED) form a disordered region. Polar residues predominate over residues 404–424 (LDSQTLPPERPLSNSMVQVSP). The stretch at 484–523 (QMFYRQQEEIRRLRELLIQREVQTKQLELEIKNLRMALGQ) forms a coiled coil.

This sequence belongs to the WD repeat coronin family. As to quaternary structure, binds actin. Component of the N-Cor repressor complex, at least composed of NCOR1, NCOR2, HDAC3, TBL1X, TBL1R, CORO2A and GPS2.

This is Coronin-2A (Coro2a) from Mus musculus (Mouse).